The following is a 315-amino-acid chain: Type II restriction enzyme AvaI (315 aa).

It catalyses the reaction Endonucleolytic cleavage of DNA to give specific double-stranded fragments with terminal 5'-phosphates.. In terms of biological role, a P subtype restriction enzyme that recognizes the double-stranded sequence 5'-CYCGRG-3' and cleaves after C-1. The polypeptide is Type II restriction enzyme AvaI (Anabaena variabilis).